The following is a 154-amino-acid chain: uncharacterized protein (154 aa).

This is an uncharacterized protein from Methanocaldococcus jannaschii (strain ATCC 43067 / DSM 2661 / JAL-1 / JCM 10045 / NBRC 100440) (Methanococcus jannaschii).